Reading from the N-terminus, the 80-residue chain is Regulatory protein HrpD6 (80 aa).

Involved in the regulation of several genes of the hrp-hrc-hpa cluster, which encodes a type III secretion system (T3SS). Upregulates the expression of hpa2, hpa1 and hpaB and partially controls the expression of hrcC and hrcT. Controls the secretion of the T3SS TAL effector AvrXa27. Also regulates the expression of several HrpX-regulated protein (Xrp) genes. Has no influence on hrpG or hrpX expression. The polypeptide is Regulatory protein HrpD6 (Xanthomonas oryzae pv. oryzicola).